Reading from the N-terminus, the 402-residue chain is Serine/threonine-protein phosphatase 4 regulatory subunit 2 (402 aa).

Residues 206–248 (MDEEFEDEDYEDHEDEEEDEEDEDNDSDVDEMEAEEVEEDASD) show a composition bias toward acidic residues. Disordered regions lie at residues 206–270 (MDEE…DVTD), 291–311 (SVLSVSSHAANEDENESILSR), and 331–402 (GFIT…KKRM). A compositionally biased stretch (low complexity) spans 348–358 (SSSSMVSPVVS). A compositionally biased stretch (polar residues) spans 371–396 (INTFISPDTTNSVTQAEKNELSTSPL).

This sequence belongs to the PPP4R2 family. In terms of assembly, regulatory subunit (R2) of the histone H2A phosphatase complex (HTP-C) consisting of PPH3, PSY2 and PSY4.

The protein resides in the nucleus. Regulatory subunit of the histone H2A phosphatase complex, which dephosphorylates H2AS128ph (gamma-H2A) that has been displaced from sites of DNA lesions in the double-stranded DNA break repair process. Dephosphorylation is necessary for efficient recovery from the DNA damage checkpoint. The sequence is that of Serine/threonine-protein phosphatase 4 regulatory subunit 2 (PSY4) from Kluyveromyces lactis (strain ATCC 8585 / CBS 2359 / DSM 70799 / NBRC 1267 / NRRL Y-1140 / WM37) (Yeast).